We begin with the raw amino-acid sequence, 206 residues long: Small ribosomal subunit protein uS4 (206 aa).

An S4 RNA-binding domain is found at 96–156; the sequence is GRLDNVVYRM…EKAKKQSRVK (61 aa).

It belongs to the universal ribosomal protein uS4 family. In terms of assembly, part of the 30S ribosomal subunit. Contacts protein S5. The interaction surface between S4 and S5 is involved in control of translational fidelity.

Its function is as follows. One of the primary rRNA binding proteins, it binds directly to 16S rRNA where it nucleates assembly of the body of the 30S subunit. Functionally, with S5 and S12 plays an important role in translational accuracy. In Escherichia fergusonii (strain ATCC 35469 / DSM 13698 / CCUG 18766 / IAM 14443 / JCM 21226 / LMG 7866 / NBRC 102419 / NCTC 12128 / CDC 0568-73), this protein is Small ribosomal subunit protein uS4.